The sequence spans 106 residues: Putative protein LRRC37A5P (106 aa).

This Homo sapiens (Human) protein is Putative protein LRRC37A5P (LRRC37A5P).